The primary structure comprises 214 residues: Adenylate kinase (214 aa).

Residue 10-15 (GAGKGT) participates in ATP binding. Residues 30–59 (STGDMFRDHKARGTEIGKQVQAIMDGGGLV) form an NMP region. AMP is bound by residues Thr31, Arg36, 57 to 59 (GLV), 85 to 88 (GYPR), and Gln92. The tract at residues 126-163 (GRRSCPRCGAVYHVSQNPPRRAGYCDRDDAELVQREDD) is LID. An ATP-binding site is contributed by Arg127. Residues Cys130 and Cys133 each contribute to the Zn(2+) site. 136-137 (VY) serves as a coordination point for ATP. Residues Cys150 and Asp153 each contribute to the Zn(2+) site. Arg160 and Arg171 together coordinate AMP. Gly199 serves as a coordination point for ATP.

It belongs to the adenylate kinase family. Monomer.

It is found in the cytoplasm. It carries out the reaction AMP + ATP = 2 ADP. Its pathway is purine metabolism; AMP biosynthesis via salvage pathway; AMP from ADP: step 1/1. Its function is as follows. Catalyzes the reversible transfer of the terminal phosphate group between ATP and AMP. Plays an important role in cellular energy homeostasis and in adenine nucleotide metabolism. This chain is Adenylate kinase, found in Anaeromyxobacter dehalogenans (strain 2CP-C).